Reading from the N-terminus, the 192-residue chain is Orotate phosphoribosyltransferase (192 aa).

Glutamate 116–serine 124 contacts 5-phospho-alpha-D-ribose 1-diphosphate. The orotate site is built by threonine 120 and arginine 148.

Belongs to the purine/pyrimidine phosphoribosyltransferase family. PyrE subfamily. In terms of assembly, homodimer. The cofactor is Mg(2+).

The catalysed reaction is orotidine 5'-phosphate + diphosphate = orotate + 5-phospho-alpha-D-ribose 1-diphosphate. It functions in the pathway pyrimidine metabolism; UMP biosynthesis via de novo pathway; UMP from orotate: step 1/2. Catalyzes the transfer of a ribosyl phosphate group from 5-phosphoribose 1-diphosphate to orotate, leading to the formation of orotidine monophosphate (OMP). This is Orotate phosphoribosyltransferase from Bartonella quintana (strain Toulouse) (Rochalimaea quintana).